Consider the following 183-residue polypeptide: Acireductone dioxygenase (183 aa).

Positions 1–21 (MVQAWYMDSDTTTDQREEHQL) are disordered. Histidine 90, histidine 92, glutamate 96, and histidine 135 together coordinate Fe(2+). Ni(2+) is bound by residues histidine 90, histidine 92, glutamate 96, and histidine 135.

The protein belongs to the acireductone dioxygenase (ARD) family. Fe(2+) is required as a cofactor. Ni(2+) serves as cofactor.

Its subcellular location is the cytoplasm. The protein resides in the nucleus. It catalyses the reaction 1,2-dihydroxy-5-(methylsulfanyl)pent-1-en-3-one + O2 = 4-methylsulfanyl-2-oxobutanoate + formate + 2 H(+). It carries out the reaction 1,2-dihydroxy-5-(methylsulfanyl)pent-1-en-3-one + O2 = 3-(methylsulfanyl)propanoate + CO + formate + 2 H(+). Its pathway is amino-acid biosynthesis; L-methionine biosynthesis via salvage pathway; L-methionine from S-methyl-5-thio-alpha-D-ribose 1-phosphate: step 5/6. Catalyzes 2 different reactions between oxygen and the acireductone 1,2-dihydroxy-3-keto-5-methylthiopentene (DHK-MTPene) depending upon the metal bound in the active site. Fe-containing acireductone dioxygenase (Fe-ARD) produces formate and 2-keto-4-methylthiobutyrate (KMTB), the alpha-ketoacid precursor of methionine in the methionine recycle pathway. Ni-containing acireductone dioxygenase (Ni-ARD) produces methylthiopropionate, carbon monoxide and formate, and does not lie on the methionine recycle pathway. The polypeptide is Acireductone dioxygenase (Ixodes scapularis (Black-legged tick)).